The following is a 101-amino-acid chain: Iron-sulfur cluster assembly protein CyaY (101 aa).

Belongs to the frataxin family.

In terms of biological role, involved in iron-sulfur (Fe-S) cluster assembly. May act as a regulator of Fe-S biogenesis. In Actinobacillus pleuropneumoniae serotype 5b (strain L20), this protein is Iron-sulfur cluster assembly protein CyaY.